The chain runs to 616 residues: Tumor necrosis factor receptor superfamily member 11A (616 aa).

The signal sequence occupies residues 1-29 (MAPRARRRRPLFALLLLCALLARLQVALQ). At 30–212 (IAPPCTSEKH…PPNEPHVYLP (183 aa)) the chain is on the extracellular side. Intrachain disulfides connect cysteine 34–cysteine 46, cysteine 47–cysteine 60, cysteine 50–cysteine 68, cysteine 71–cysteine 86, cysteine 92–cysteine 112, cysteine 114–cysteine 127, cysteine 124–cysteine 126, cysteine 133–cysteine 151, and cysteine 154–cysteine 169. 4 TNFR-Cys repeats span residues 34 to 68 (CTSEKHYEHLGRCCNKCEPGKYMSSKCTTTSDSVC), 71 to 112 (CGPD…PRRC), 114 to 151 (CTAGYHWSQDCECCRRNTECAPGLGAQHPLQLNKDTVC), and 154 to 194 (CLAG…DAVC). The N-linked (GlcNAc...) asparagine glycan is linked to asparagine 105. Residues cysteine 133, alanine 134, and serine 160 each contribute to the Na(+) site. The N-linked (GlcNAc...) asparagine glycan is linked to asparagine 174. A disulfide bond links cysteine 175 and cysteine 194. Residues 213–233 (GLIILLLFASVALVAAIIFGV) traverse the membrane as a helical segment. At 234–616 (CYRKKGKALT…PVQEQGGAKA (383 aa)) the chain is on the cytoplasmic side. A disordered region spans residues 468–536 (PLPQCAYGMG…GNSNSTFISS (69 aa)). Over residues 483-493 (EASRTEARDQP) the composition is skewed to basic and acidic residues. Residues 499–508 (GRLPSSARAG) show a composition bias toward low complexity. The span at 524-536 (NVTGNSNSTFISS) shows a compositional bias: polar residues. The segment at 544 to 549 (GDIIVV) is required for interaction with EEIG1 and osteoclast differentiation. The tract at residues 556–616 (QEGAAAAAEP…PVQEQGGAKA (61 aa)) is disordered. Residues 570–580 (VQEETLARRDS) show a composition bias toward basic and acidic residues. Serine 580 carries the phosphoserine modification.

As to quaternary structure, binds to the clefts between the subunits of the TNFSF11 ligand trimer to form a heterohexamer. Part of a complex composed of EEIG1, TNFRSF11A/RANK, PLCG2, GAB2, TEC and BTK; complex formation increases in the presence of TNFSF11/RANKL. Interacts with TRAF1, TRAF2, TRAF3, TRAF5 and TRAF6. Interacts (via cytoplasmic domain) with GAB2. Interacts (via cytoplasmic domain); with EEIG1 (via N-terminus); when in the presence of TNFSF11/RANKL. As to expression, ubiquitous expression with high levels in skeletal muscle, thymus, liver, colon, small intestine and adrenal gland.

It localises to the cell membrane. The protein localises to the membrane raft. Receptor for TNFSF11/RANKL/TRANCE/OPGL; essential for RANKL-mediated osteoclastogenesis. Its interaction with EEIG1 promotes osteoclastogenesis via facilitating the transcription of NFATC1 and activation of PLCG2. Involved in the regulation of interactions between T-cells and dendritic cells. This is Tumor necrosis factor receptor superfamily member 11A (TNFRSF11A) from Homo sapiens (Human).